The sequence spans 347 residues: Phenylalanine--tRNA ligase alpha subunit (347 aa).

E261 provides a ligand contact to Mg(2+).

Belongs to the class-II aminoacyl-tRNA synthetase family. Phe-tRNA synthetase alpha subunit type 1 subfamily. In terms of assembly, tetramer of two alpha and two beta subunits. The cofactor is Mg(2+).

It is found in the cytoplasm. The enzyme catalyses tRNA(Phe) + L-phenylalanine + ATP = L-phenylalanyl-tRNA(Phe) + AMP + diphosphate + H(+). This Streptococcus equi subsp. equi (strain 4047) protein is Phenylalanine--tRNA ligase alpha subunit.